A 489-amino-acid polypeptide reads, in one-letter code: Ubiquitin carboxyl-terminal hydrolase 14 (489 aa).

A USP domain is found at 102–458; that stretch reads CGLANLGNTC…SAYVLLYEAR (357 aa). Cys-111 (nucleophile) is an active-site residue. His-409 serves as the catalytic Proton acceptor. The tract at residues 467-489 is disordered; sequence PPAPVPTEVAADTAEPMEVSEKQ.

The protein belongs to the peptidase C19 family. USP14/UBP6 subfamily.

The catalysed reaction is Thiol-dependent hydrolysis of ester, thioester, amide, peptide and isopeptide bonds formed by the C-terminal Gly of ubiquitin (a 76-residue protein attached to proteins as an intracellular targeting signal).. Its function is as follows. Proteasome-associated deubiquitinase which releases ubiquitin from the proteasome targeted ubiquitinated proteins. Ensures the regeneration of ubiquitin at the proteasome. The sequence is that of Ubiquitin carboxyl-terminal hydrolase 14 (usp-14) from Caenorhabditis elegans.